A 325-amino-acid polypeptide reads, in one-letter code: MAQMTMVQAINDALKTELKNDQDVLIFGEDVGVNGGVFRVTEGLQKEFGEDRVFDTPLAESGIGGLAMGLAVEGFRPVMEVQFLGFVFEVFDAIAGQIARTRFRSGGTKTAPVTIRGPFGGGVHTPELHADNLEGILAQSPGLKVVIPSGPYDAKGLLISSIRSNDPVVYLEHMKLYRSFREEVPEEEYTIDIGKANVKKEGNDISIITYGAMVQESMKAAEELEKDGYSVEVIDLRTVQPIDVDTIVASVEKTGRAVVVQEAQRQAGVGAAVVAELSERAILSLEAPIGRVAAADTIYPFTQAENVWLPNKNDIIEKAKETLEF.

Residue E60 participates in thiamine diphosphate binding.

Heterodimer of an alpha and a beta chain. The cofactor is thiamine diphosphate.

It catalyses the reaction N(6)-[(R)-lipoyl]-L-lysyl-[protein] + pyruvate + H(+) = N(6)-[(R)-S(8)-acetyldihydrolipoyl]-L-lysyl-[protein] + CO2. Its function is as follows. The pyruvate dehydrogenase complex catalyzes the overall conversion of pyruvate to acetyl-CoA and CO(2). It contains multiple copies of three enzymatic components: pyruvate dehydrogenase (E1), dihydrolipoamide acetyltransferase (E2) and lipoamide dehydrogenase (E3). This is Pyruvate dehydrogenase E1 component subunit beta (pdhB) from Staphylococcus aureus (strain COL).